The chain runs to 496 residues: Aspartyl/glutamyl-tRNA(Asn/Gln) amidotransferase subunit B (496 aa).

A disordered region spans residues 475 to 496; the sequence is TGGSADPSKVNTLLREQLEDKK.

The protein belongs to the GatB/GatE family. GatB subfamily. As to quaternary structure, heterotrimer of A, B and C subunits.

The catalysed reaction is L-glutamyl-tRNA(Gln) + L-glutamine + ATP + H2O = L-glutaminyl-tRNA(Gln) + L-glutamate + ADP + phosphate + H(+). It catalyses the reaction L-aspartyl-tRNA(Asn) + L-glutamine + ATP + H2O = L-asparaginyl-tRNA(Asn) + L-glutamate + ADP + phosphate + 2 H(+). Functionally, allows the formation of correctly charged Asn-tRNA(Asn) or Gln-tRNA(Gln) through the transamidation of misacylated Asp-tRNA(Asn) or Glu-tRNA(Gln) in organisms which lack either or both of asparaginyl-tRNA or glutaminyl-tRNA synthetases. The reaction takes place in the presence of glutamine and ATP through an activated phospho-Asp-tRNA(Asn) or phospho-Glu-tRNA(Gln). The protein is Aspartyl/glutamyl-tRNA(Asn/Gln) amidotransferase subunit B of Haloquadratum walsbyi (strain DSM 16790 / HBSQ001).